Consider the following 365-residue polypeptide: Solute carrier family 35 member G1 (365 aa).

Residues 1–33 (MRPQDSTGVAELQEPGLPLTDDAPPGATEEPAA) are disordered. Positions 23–33 (APPGATEEPAA) are enriched in low complexity. A run of 10 helical transmembrane segments spans residues 69 to 89 (GLGLFYTLLSAFLFSVGSLFV), 97 to 117 (AVEISAFRCVFQMLVVIPCLI), 131 to 151 (IFLILRGVLGSTAMMLIYYAY), 156 to 176 (LADATVITFSSPVFTSIFAWI), 187 to 207 (ALFTVFTITGVILIVRPPFLF), 222 to 242 (LKGTFAAIGSAVFAASTLVIL), 252 to 272 (FLSIWYYVVLGLVESVIILSV), 286 to 306 (LFLIFIGLFGLGGQIFITKAL), 311 to 333 (AGPVAIMKTMDVVFAFIFQIIFF), and 338 to 357 (TWWTVGGALCVVASNVGAAI). 2 EamA domains span residues 80–202 (FLFS…LIVR) and 233–357 (VFAA…GAAI).

The protein belongs to the TMEM20 family. As to quaternary structure, interacts with STIM1; stimulated by depletion of intracellular calcium. Interacts with ORAI1. Interacts with the plasma membrane calcium-transporting ATPases ATP2B1 and ATP2B4. Interacts with ATP1A1, ATP2A2, KPNB1 and XPO1. Ubiquitously expressed.

It localises to the cell membrane. Its subcellular location is the endoplasmic reticulum membrane. May play a role in intracellular calcium sensing and homeostasis. May act as a negative regulator of plasma membrane calcium-transporting ATPases preventing calcium efflux from the cell. The polypeptide is Solute carrier family 35 member G1 (SLC35G1) (Homo sapiens (Human)).